Consider the following 291-residue polypeptide: MPELPEVETVRRGLEPVLMGSRIISVSLGCKNLRFPFPESFSERLTGRIIIKLSRRAKYLLFHLSQNETIVSHLGMSGSWRVEDDLLRKKHSYMGKLVAHDHFIMSFQATNGKIYRLIYNDSRRFGFMLLADTMRLYEHPLLRNLGLEPIDNAVSGAYLQKAFINKKTSLKAALLDQSIVAGLGNIYVCEALWRSYLSPERRALTLASKSAHACELAKCLAQNICDVISEAIFSGGSSLRDYVHIDGSLGYFQHCFSVYGREGKECSRCGMHIVRIVQSGRSSFYCPQCQK.

P2 functions as the Schiff-base intermediate with DNA in the catalytic mechanism. The Proton donor role is filled by E3. The active-site Proton donor; for beta-elimination activity is the K58. Residues H100, R123, and K166 each coordinate DNA. The FPG-type zinc-finger motif lies at 257–291; it reads SVYGREGKECSRCGMHIVRIVQSGRSSFYCPQCQK. The active-site Proton donor; for delta-elimination activity is R281.

This sequence belongs to the FPG family. As to quaternary structure, monomer. The cofactor is Zn(2+).

It catalyses the reaction Hydrolysis of DNA containing ring-opened 7-methylguanine residues, releasing 2,6-diamino-4-hydroxy-5-(N-methyl)formamidopyrimidine.. The enzyme catalyses 2'-deoxyribonucleotide-(2'-deoxyribose 5'-phosphate)-2'-deoxyribonucleotide-DNA = a 3'-end 2'-deoxyribonucleotide-(2,3-dehydro-2,3-deoxyribose 5'-phosphate)-DNA + a 5'-end 5'-phospho-2'-deoxyribonucleoside-DNA + H(+). Functionally, involved in base excision repair of DNA damaged by oxidation or by mutagenic agents. Acts as a DNA glycosylase that recognizes and removes damaged bases. Has a preference for oxidized purines, such as 7,8-dihydro-8-oxoguanine (8-oxoG). Has AP (apurinic/apyrimidinic) lyase activity and introduces nicks in the DNA strand. Cleaves the DNA backbone by beta-delta elimination to generate a single-strand break at the site of the removed base with both 3'- and 5'-phosphates. This is Formamidopyrimidine-DNA glycosylase from Bartonella bacilliformis (strain ATCC 35685 / KC583 / Herrer 020/F12,63).